Reading from the N-terminus, the 243-residue chain is Probable transcriptional regulatory protein Bpet3099 (243 aa).

Residues 1–21 (MAGHSKWANIQHRKGRQDAKR) form a disordered region.

It belongs to the TACO1 family.

It is found in the cytoplasm. This Bordetella petrii (strain ATCC BAA-461 / DSM 12804 / CCUG 43448) protein is Probable transcriptional regulatory protein Bpet3099.